Reading from the N-terminus, the 607-residue chain is Rap1 GTPase-GDP dissociation stimulator 1 (607 aa).

2 ARM repeats span residues 89-131 (GLIS…DQAG) and 170-211 (DSLQ…NLAE). The tract at residues 122–170 (EGRSAVDQAGGAQIVIDHLRSLCGRTDPASEKLMTVFCGMLMNYSNEND) is prevents binding to prenylated RHOA. Lys230 bears the N6-acetyllysine mark. ARM repeat units follow at residues 347 to 390 (DGNC…NLAI), 391 to 431 (PVVN…MLID), and 479 to 519 (SKDV…LIAA).

As to quaternary structure, interacts with RABL3. Interacts with RHOT1. In terms of assembly, interacts with unprenylated RHOA; the interaction is direct. Interacts with RAP1A. Interacts with KRAS. Interacts with RAC1. Interacts with RAP1B. Preferentially interacts with unprenylated GTPases that will become geranylgeranylated. May also interact with prenylated GTPases. Interacts with prenylated RHOA; the interaction is direct and in a 1:1 stoichiometry. Interacts with RAP1A. Interacts with KRAS. Interacts with RAC1. Interacts with RAP1B. Preferentially interacts with prenylated GTPases. Serotonylated on Gln residues by TGM2 in response to hypoxia, leading to its inactivation.

The protein resides in the cytoplasm. It localises to the cytosol. It is found in the endoplasmic reticulum. Its subcellular location is the mitochondrion. The protein localises to the nucleus. Its function is as follows. Acts as a GEF (guanine nucleotide exchange factor) for the Rho family of small GTP-binding proteins (G proteins) that stimulates the dissociation of GDP to enable subsequent binding of GTP. Additionally, appears to chaperone the processing and/or trafficking of small GTPases containing a C-terminal polybasic region independently of GEF activity. Targets include RAP1A/RAP1B, RHOA, RHOB, RHOC, RAC1 and KRAS. Regulates mitochondrial dynamics by controlling RHOT function to promote mitochondrial fission during high calcium conditions. Able to promote the Ca(2+) release from the endoplasmic reticulum via both inositol trisphosphate (Ins3P) and ryanodine sensitive receptors leading to a enhanced mitochondrial Ca(2+) uptake. Functionally, acts as a GEF (guanine nucleotide exchange factor) for unprenylated RHOA. Chaperones the entry and passage of small GTPases through the prenylation pathway. Recognizes the last amino acid in the GTPase C-terminal CAAX motif with a preference for 'Leu' over 'Met', indicating involvement in the geranylgeranylation pathway. May also recognize prenylated GTPases. In terms of biological role, acts as a GEF (guanine nucleotide exchange factor) for prenylated RHOA. Acts as a GEF for RHOC. Chaperones the downstream trafficking and/or processing of small newly prenylated GTPases. Escorts RAC1 to the nucleus. This chain is Rap1 GTPase-GDP dissociation stimulator 1, found in Mus musculus (Mouse).